The chain runs to 194 residues: Peptidyl-tRNA hydrolase (194 aa).

Position 16 (tyrosine 16) interacts with tRNA. Histidine 21 (proton acceptor) is an active-site residue. Residues phenylalanine 67, asparagine 69, and asparagine 115 each contribute to the tRNA site.

This sequence belongs to the PTH family. Monomer.

The protein resides in the cytoplasm. It carries out the reaction an N-acyl-L-alpha-aminoacyl-tRNA + H2O = an N-acyl-L-amino acid + a tRNA + H(+). Its function is as follows. Hydrolyzes ribosome-free peptidyl-tRNAs (with 1 or more amino acids incorporated), which drop off the ribosome during protein synthesis, or as a result of ribosome stalling. Functionally, catalyzes the release of premature peptidyl moieties from peptidyl-tRNA molecules trapped in stalled 50S ribosomal subunits, and thus maintains levels of free tRNAs and 50S ribosomes. The polypeptide is Peptidyl-tRNA hydrolase (Escherichia fergusonii (strain ATCC 35469 / DSM 13698 / CCUG 18766 / IAM 14443 / JCM 21226 / LMG 7866 / NBRC 102419 / NCTC 12128 / CDC 0568-73)).